The chain runs to 364 residues: DNA replication and repair protein RecF (364 aa).

30–37 (GENGSGKT) contributes to the ATP binding site.

The protein belongs to the RecF family.

Its subcellular location is the cytoplasm. Functionally, the RecF protein is involved in DNA metabolism; it is required for DNA replication and normal SOS inducibility. RecF binds preferentially to single-stranded, linear DNA. It also seems to bind ATP. The polypeptide is DNA replication and repair protein RecF (Xylella fastidiosa (strain M23)).